The chain runs to 355 residues: Peptide chain release factor 1 (355 aa).

At Gln233 the chain carries N5-methylglutamine. The span at 280-293 (ERRKKEQERADSRR) shows a compositional bias: basic and acidic residues. The interval 280–308 (ERRKKEQERADSRRGQVGSGDRSERIRTY) is disordered.

This sequence belongs to the prokaryotic/mitochondrial release factor family. Methylated by PrmC. Methylation increases the termination efficiency of RF1.

The protein resides in the cytoplasm. Its function is as follows. Peptide chain release factor 1 directs the termination of translation in response to the peptide chain termination codons UAG and UAA. This Rickettsia felis (strain ATCC VR-1525 / URRWXCal2) (Rickettsia azadi) protein is Peptide chain release factor 1.